A 365-amino-acid polypeptide reads, in one-letter code: Protein YIM1 (365 aa).

It belongs to the YIM1 family.

The protein resides in the lipid droplet. It localises to the mitochondrion. The protein is Protein YIM1 (YIM1) of Saccharomyces cerevisiae (strain ATCC 204508 / S288c) (Baker's yeast).